The sequence spans 380 residues: Alanine racemase (380 aa).

Residue lysine 34 is the Proton acceptor; specific for D-alanine of the active site. N6-(pyridoxal phosphate)lysine is present on lysine 34. Arginine 135 is a substrate binding site. Catalysis depends on tyrosine 267, which acts as the Proton acceptor; specific for L-alanine. Substrate is bound at residue methionine 315.

Belongs to the alanine racemase family. Pyridoxal 5'-phosphate is required as a cofactor.

The enzyme catalyses L-alanine = D-alanine. Its pathway is amino-acid biosynthesis; D-alanine biosynthesis; D-alanine from L-alanine: step 1/1. Its function is as follows. Catalyzes the interconversion of L-alanine and D-alanine. May also act on other amino acids. This Lawsonia intracellularis (strain PHE/MN1-00) protein is Alanine racemase (alr).